The primary structure comprises 341 residues: Muscleblind-like protein 1 (341 aa).

At Thr6 the chain carries Phosphothreonine. C3H1-type zinc fingers lie at residues 13–41, 47–73, 178–206, and 214–240; these read WLTL…HPSK, NGRV…HPPP, TDRL…HPAD, and DNTV…HPPA.

This sequence belongs to the muscleblind family. As to quaternary structure, interacts with DDX1 and YBX1. Interacts with HNRNPH1; the interaction in RNA-independent. Interacts with RBPMS; the interaction allows cooperative assembly of RNA-bound stable cell-specific alternative splicing regulatory complexes. Highly expressed in cardiac and skeletal muscle. Weakly expressed in heart and eye (at protein level).

Its subcellular location is the nucleus. The protein localises to the cytoplasm. It localises to the cytoplasmic granule. Its function is as follows. Mediates pre-mRNA alternative splicing regulation. Acts either as activator or repressor of splicing on specific pre-mRNA targets. Inhibits cardiac troponin-T (TNNT2) pre-mRNA exon inclusion but induces insulin receptor (IR) pre-mRNA exon inclusion in muscle. Antagonizes the alternative splicing activity pattern of CELF proteins. Regulates the TNNT2 exon 5 skipping through competition with U2AF2. Inhibits the formation of the spliceosome A complex on intron 4 of TNNT2 pre-mRNA. Binds to the stem-loop structure within the polypyrimidine tract of TNNT2 intron 4 during spliceosome assembly. Binds to the 5'-YGCU(U/G)Y-3'consensus sequence. Binds to the IR RNA. Binds to CUG triplet repeat expansion in myotonic dystrophy muscle cells by sequestering the target RNAs. Together with RNA binding proteins RBPMS and RBFOX2, activates vascular smooth muscle cells alternative splicing events. Regulates NCOR2 alternative splicing. In Mus musculus (Mouse), this protein is Muscleblind-like protein 1 (Mbnl1).